Consider the following 232-residue polypeptide: Y-linked testis-specific protein 1 (232 aa).

The protein belongs to the SPIN/STSY family. In terms of tissue distribution, expressed in testis (at protein level).

The sequence is that of Y-linked testis-specific protein 1 (Ssty1) from Mus musculus (Mouse).